Here is a 133-residue protein sequence, read N- to C-terminus: Small ribosomal subunit protein uS8 (133 aa).

The protein belongs to the universal ribosomal protein uS8 family. Part of the 30S ribosomal subunit. Contacts proteins S5 and S12.

In terms of biological role, one of the primary rRNA binding proteins, it binds directly to 16S rRNA central domain where it helps coordinate assembly of the platform of the 30S subunit. This chain is Small ribosomal subunit protein uS8, found in Chlamydia pneumoniae (Chlamydophila pneumoniae).